We begin with the raw amino-acid sequence, 101 residues long: Enhancer of yellow 2 transcription factor (101 aa).

Belongs to the ENY2 family. Component of the nuclear pore complex (NPC)-associated AMEX complex (anchoring and mRNA export complex), composed of at least e(y)2 and xmas-2. Component of the SAGA transcription coactivator-HAT complexes, at least composed of Ada2b, e(y)2, Pcaf/Gcn5, Taf10 and Nipped-A/Trrap. Within the SAGA complex, e(y)2, Sgf11, and not/nonstop form an additional subcomplex of SAGA called the DUB module (deubiquitination module). Component of the THO complex, composed of at least e(y)2, HPR1, THO2, THOC5, THOC6 and THOC7. Interacts with e(y)1. Interacts with su(Hw) (via zinc fingers). Interacts with xmas-2; required for localization to the nuclear periphery. Interacts with the nuclear pore complex (NPC).

The protein localises to the nucleus. It is found in the nucleoplasm. The protein resides in the cytoplasm. Its function is as follows. Involved in mRNA export coupled transcription activation by association with both the AMEX and the SAGA complexes. The SAGA complex is a multiprotein complex that activates transcription by remodeling chromatin and mediating histone acetylation and deubiquitination. Within the SAGA complex, participates in a subcomplex that specifically deubiquitinates histone H2B. The SAGA complex is recruited to specific gene promoters by activators, where it is required for transcription. Required for nuclear receptor-mediated transactivation. Involved in transcription elongation by recruiting the THO complex onto nascent mRNA. The AMEX complex functions in docking export-competent ribonucleoprotein particles (mRNPs) to the nuclear entrance of the nuclear pore complex (nuclear basket). AMEX participates in mRNA export and accurate chromatin positioning in the nucleus by tethering genes to the nuclear periphery. This Drosophila yakuba (Fruit fly) protein is Enhancer of yellow 2 transcription factor.